We begin with the raw amino-acid sequence, 490 residues long: GTPase Der (490 aa).

EngA-type G domains follow at residues 3 to 166 and 203 to 376; these read PVVA…MDDV and IKLA…DSST. Residues 9-16, 56-60, 118-121, 209-216, 256-260, and 321-324 each bind GTP; these read GRPNVGKS, DTGGI, NKTD, DTAGV, and NKWD. The 85-residue stretch at 377–461 folds into the KH-like domain; the sequence is RRVSTAMLTR…PIRIQFKEGE (85 aa).

It belongs to the TRAFAC class TrmE-Era-EngA-EngB-Septin-like GTPase superfamily. EngA (Der) GTPase family. In terms of assembly, associates with the 50S ribosomal subunit.

Functionally, GTPase that plays an essential role in the late steps of ribosome biogenesis. In Salmonella typhi, this protein is GTPase Der.